Reading from the N-terminus, the 428-residue chain is Phosphomethylpyrimidine synthase 1 (428 aa).

Residues Asn65, Met94, Tyr123, His158, 180-182 (SRG), 221-224 (DGMR), and Glu260 contribute to the substrate site. His264 contributes to the Zn(2+) binding site. A substrate-binding site is contributed by Tyr287. His328 lines the Zn(2+) pocket. Positions 405, 408, and 412 each coordinate [4Fe-4S] cluster.

The protein belongs to the ThiC family. The cofactor is [4Fe-4S] cluster.

It catalyses the reaction 5-amino-1-(5-phospho-beta-D-ribosyl)imidazole + S-adenosyl-L-methionine = 4-amino-2-methyl-5-(phosphooxymethyl)pyrimidine + CO + 5'-deoxyadenosine + formate + L-methionine + 3 H(+). The protein operates within cofactor biosynthesis; thiamine diphosphate biosynthesis. Functionally, catalyzes the synthesis of the hydroxymethylpyrimidine phosphate (HMP-P) moiety of thiamine from aminoimidazole ribotide (AIR) in a radical S-adenosyl-L-methionine (SAM)-dependent reaction. In Methanosarcina mazei (strain ATCC BAA-159 / DSM 3647 / Goe1 / Go1 / JCM 11833 / OCM 88) (Methanosarcina frisia), this protein is Phosphomethylpyrimidine synthase 1.